A 526-amino-acid chain; its full sequence is Lycopene epsilon cyclase, chloroplastic (526 aa).

Residue 108–136 participates in NAD(+) binding; sequence LVVIGCGPAGLALAAESAKLGLNVGLVGP. Transmembrane regions (helical) follow at residues 443 to 463 and 477 to 497; these read FFLF…RSFF and FLGS…MFII.

This sequence belongs to the lycopene cyclase family.

Its subcellular location is the plastid. The protein localises to the chloroplast membrane. The enzyme catalyses a carotenoid psi-end group = a carotenoid epsilon-end group. It participates in carotenoid biosynthesis; alpha-zeacarotene biosynthesis. It functions in the pathway carotenoid biosynthesis; delta-carotene biosynthesis. Catalyzes the single cyclization reaction which converts lycopene to delta-carotene and neurosporene to alpha-zeacarotene. Required for lutein biosynthesis. The sequence is that of Lycopene epsilon cyclase, chloroplastic from Solanum lycopersicum (Tomato).